A 357-amino-acid chain; its full sequence is Protein-arginine kinase (357 aa).

In terms of domain architecture, Phosphagen kinase C-terminal spans 24–256; it reads VIISSRVRLA…LQLVTQERAA (233 aa). Residues 27 to 31, His93, Arg127, 178 to 182, and 209 to 214 each bind ATP; these read SSRVR, RASVM, and RGLYGE. Positions 339–344 match the RDXXRA motif of the pArg binding pocket involved in allosteric regulation motif; it reads RDIFRA.

Belongs to the ATP:guanido phosphotransferase family.

The enzyme catalyses L-arginyl-[protein] + ATP = N(omega)-phospho-L-arginyl-[protein] + ADP + H(+). With respect to regulation, appears to be allosterically activated by the binding of pArg-containing polypeptides to the pArg-binding pocket localized in the C-terminal domain of McsB. Functionally, catalyzes the specific phosphorylation of arginine residues in proteins. This chain is Protein-arginine kinase, found in Desulforamulus reducens (strain ATCC BAA-1160 / DSM 100696 / MI-1) (Desulfotomaculum reducens).